We begin with the raw amino-acid sequence, 146 residues long: MELNSLKPAAGASKNRKRIGRGTGSGHGKTATKGHKGQKARSGGSIKAGFEGGQMPMHRRLPKRGFTPLAKKIYSVVNLSQLDVFETGSCVDIEAMQKSGLVKNVCDGIKILATGELTKALTVKAHKFSATARNKITSVGGTVEEI.

The interval 1–61 is disordered; the sequence is MELNSLKPAA…GGQMPMHRRL (61 aa). A compositionally biased stretch (basic residues) spans 30-39; the sequence is TATKGHKGQK.

Belongs to the universal ribosomal protein uL15 family. Part of the 50S ribosomal subunit.

Its function is as follows. Binds to the 23S rRNA. The sequence is that of Large ribosomal subunit protein uL15 from Geotalea uraniireducens (strain Rf4) (Geobacter uraniireducens).